Here is a 384-residue protein sequence, read N- to C-terminus: MPNASRVVIVAGEESGDHHAAELVKQLKAVYPNLKISGIGGKHLRAAGVHLISDLTRYAVTGLTEIIPFLKIFHKAFQDIKQHLSTQKPDLLILVDYPAFNLRLAKYAKKKLGLKIIYYISPQIWAWKGKRIHLIKDSIDKMAVIFPFEKTIYENAGVPVSFVGHPLVKKIASAKDKHSSRTFLGLPLDEPIIALLPGSRHSEIERHIPILVNTAKLLTLDNPKLRFVVPIAGTINPDKVKAYFSNQNLTVTFIQGQAIECMSAADFVIVASGTASLECALLEKPMCIIYKSSFLTYVAAMYFIKVKFLGLCNLLANKMMVPEFLQYDCNEIELSRYISNFHSDPNQPKSMINQLAKLKESLSSSQADCSLFDLVVAELPEKNA.

It belongs to the LpxB family.

It catalyses the reaction a lipid X + a UDP-2-N,3-O-bis[(3R)-3-hydroxyacyl]-alpha-D-glucosamine = a lipid A disaccharide + UDP + H(+). It participates in bacterial outer membrane biogenesis; LPS lipid A biosynthesis. Its function is as follows. Condensation of UDP-2,3-diacylglucosamine and 2,3-diacylglucosamine-1-phosphate to form lipid A disaccharide, a precursor of lipid A, a phosphorylated glycolipid that anchors the lipopolysaccharide to the outer membrane of the cell. The chain is Lipid-A-disaccharide synthase 1 from Legionella pneumophila (strain Paris).